Consider the following 368-residue polypeptide: Glutamyl-tRNA reductase (368 aa).

Residues 43–46 (TCHR), Ser89, 94–96 (EHQ), and Gln100 each bind substrate. The active-site Nucleophile is Cys44. Residue 164–169 (GTGMMG) participates in NADP(+) binding.

This sequence belongs to the glutamyl-tRNA reductase family. As to quaternary structure, homodimer.

The enzyme catalyses (S)-4-amino-5-oxopentanoate + tRNA(Glu) + NADP(+) = L-glutamyl-tRNA(Glu) + NADPH + H(+). It participates in porphyrin-containing compound metabolism; protoporphyrin-IX biosynthesis; 5-aminolevulinate from L-glutamyl-tRNA(Glu): step 1/2. Catalyzes the NADPH-dependent reduction of glutamyl-tRNA(Glu) to glutamate 1-semialdehyde (GSA). This is Glutamyl-tRNA reductase from Thermosipho melanesiensis (strain DSM 12029 / CIP 104789 / BI429).